Here is a 1007-residue protein sequence, read N- to C-terminus: Serine/threonine-protein kinase PRP4 homolog (1007 aa).

The interval 1-104 (MAATEPPSLR…PAKRTKLDDL (104 aa)) is disordered. Alanine 2 carries the N-acetylalanine modification. Serine 8, serine 21, serine 24, and serine 33 each carry phosphoserine. 2 stretches are compositionally biased toward basic residues: residues 40 to 60 (KHSR…KHKH) and 68 to 82 (KKHK…HKRK). Residues 83 to 92 (EVLDASDKEG) show a composition bias toward basic and acidic residues. Phosphoserine is present on residues serine 88 and serine 94. Residue lysine 100 is modified to N6-acetyllysine; alternate. A Glycyl lysine isopeptide (Lys-Gly) (interchain with G-Cter in SUMO2); alternate cross-link involves residue lysine 100. Lysine 112 participates in a covalent cross-link: Glycyl lysine isopeptide (Lys-Gly) (interchain with G-Cter in SUMO2). Lysine 118 participates in a covalent cross-link: Glycyl lysine isopeptide (Lys-Gly) (interchain with G-Cter in SUMO2); alternate. Lysine 118 is covalently cross-linked (Glycyl lysine isopeptide (Lys-Gly) (interchain with G-Cter in SUMO1); alternate). Serine 132 is modified (phosphoserine). Phosphotyrosine is present on tyrosine 141. 2 disordered regions span residues 141-535 (YESG…EDEE) and 560-583 (NISV…SPDD). Serine 143, serine 145, and serine 167 each carry phosphoserine. Residues 158-169 (GNRSSTRSSSTR) show a composition bias toward low complexity. Residues lysine 171 and lysine 178 each participate in a glycyl lysine isopeptide (Lys-Gly) (interchain with G-Cter in SUMO2) cross-link. Composition is skewed to basic residues over residues 180 to 203 (SAKK…RKSK) and 215 to 231 (RSKS…SKRS). A phosphoserine mark is found at serine 240, serine 242, serine 258, serine 278, serine 292, and serine 294. Residues 248-271 (RSQEKVGKARSPADEKIKSEEKGK) are compositionally biased toward basic and acidic residues. The span at 294–303 (SPVDLRDKSK) shows a compositional bias: basic and acidic residues. Over residues 304–315 (DRRSRSKERKSK) the composition is skewed to basic residues. Basic and acidic residues predominate over residues 316 to 325 (RSEIDKEKKP). A phosphoserine mark is found at serine 328, serine 354, serine 356, serine 366, and serine 368. Basic residues predominate over residues 342-367 (PSRRPGRSPKRRSLSPKQRDKSRRSR). Threonine 385 bears the Phosphothreonine mark. Position 387 is a phosphoserine (serine 387). 2 stretches are compositionally biased toward basic and acidic residues: residues 395-408 (RSLE…ERRR) and 415-429 (RPRD…RSKD). A phosphoserine mark is found at serine 427, serine 431, and serine 437. Residues 438–497 (PSRRRSRSPIRRRSRSPLRRSRSPRRRSRSPRRRDRSRRSRSRLRRRSRSRGGHRRRSRS) show a composition bias toward basic residues. Phosphoserine occurs at positions 518, 519, 520, 565, 569, 576, 578, and 580. Over residues 518-535 (SSSDDNLEDFDVEEEDEE) the composition is skewed to acidic residues. Residues 562-581 (SVPSEPSSPQSSTRSRSPSP) show a composition bias toward low complexity. Residues lysine 593 and lysine 659 each participate in a glycyl lysine isopeptide (Lys-Gly) (interchain with G-Cter in SUMO2) cross-link. The 317-residue stretch at 687-1003 (YNVYGYTGQG…INQALQHAFI (317 aa)) folds into the Protein kinase domain. Residues 693–701 (TGQGVFSNV) and lysine 717 each bind ATP. N6-acetyllysine is present on lysine 717. Aspartate 815 serves as the catalytic Proton acceptor. Residue tyrosine 849 is modified to Phosphotyrosine. A Phosphoserine modification is found at serine 852.

The protein belongs to the protein kinase superfamily. CMGC Ser/Thr protein kinase family. As to quaternary structure, interacts with CLK1 C-terminus. Associates with the U5 snRNP and NCOR1 deacetylase complexes. Identified in the spliceosome C complex. In terms of processing, phosphorylated by CLK1. Autophosphorylated; phosphorylation inhibits interaction with its targets, such as PRPF6 or SMARCA4.

The protein resides in the nucleus. The protein localises to the chromosome. It localises to the centromere. It is found in the kinetochore. It carries out the reaction L-seryl-[protein] + ATP = O-phospho-L-seryl-[protein] + ADP + H(+). The catalysed reaction is L-threonyl-[protein] + ATP = O-phospho-L-threonyl-[protein] + ADP + H(+). Serine/threonine kinase involved in spliceosomal assembly as well as mitosis and signaling regulation. Connects chromatin mediated regulation of transcription and pre-mRNA splicing. During spliceosomal assembly, interacts with and phosphorylates PRPF6 and PRPF31, components of the U4/U6-U5 tri-small nuclear ribonucleoprotein (snRNP), to facilitate the formation of the spliceosome B complex. Plays a role in regulating transcription and the spindle assembly checkpoint (SAC). Associates with U5 snRNP and NCOR1 deacetylase complexes which may allow a coordination of pre-mRNA splicing with chromatin remodeling events involved in transcriptional regulation. Associates and probably phosphorylates SMARCA4 and NCOR1. Phosphorylates SRSF1. Associates with kinetochores during mitosis and is necessary for recruitment and maintenance of the checkpoint proteins such as MAD1L1 and MAD12L1 at the kinetochores. Phosphorylates and regulates the activity of the transcription factors such as ELK1 and KLF13. Phosphorylates nuclear YAP1 and WWTR1/TAZ which induces nuclear exclusion and regulates Hippo signaling pathway, involved in tissue growth control. In Rattus norvegicus (Rat), this protein is Serine/threonine-protein kinase PRP4 homolog (Prp4k).